A 366-amino-acid chain; its full sequence is Chorismate synthase (366 aa).

Residue Arg-48 coordinates NADP(+). Residues 125–127, 241–242, Gly-285, 300–304, and Arg-326 each bind FMN; these read RSS, NA, and KPTSS.

The protein belongs to the chorismate synthase family. As to quaternary structure, homotetramer. FMNH2 serves as cofactor.

It catalyses the reaction 5-O-(1-carboxyvinyl)-3-phosphoshikimate = chorismate + phosphate. The protein operates within metabolic intermediate biosynthesis; chorismate biosynthesis; chorismate from D-erythrose 4-phosphate and phosphoenolpyruvate: step 7/7. Its function is as follows. Catalyzes the anti-1,4-elimination of the C-3 phosphate and the C-6 proR hydrogen from 5-enolpyruvylshikimate-3-phosphate (EPSP) to yield chorismate, which is the branch point compound that serves as the starting substrate for the three terminal pathways of aromatic amino acid biosynthesis. This reaction introduces a second double bond into the aromatic ring system. In Ruegeria pomeroyi (strain ATCC 700808 / DSM 15171 / DSS-3) (Silicibacter pomeroyi), this protein is Chorismate synthase.